The primary structure comprises 55 residues: Large ribosomal subunit protein bL33 (55 aa).

Belongs to the bacterial ribosomal protein bL33 family.

This chain is Large ribosomal subunit protein bL33, found in Zymomonas mobilis subsp. mobilis (strain ATCC 31821 / ZM4 / CP4).